The primary structure comprises 113 residues: Iron-sulfur cluster insertion protein ErpA (113 aa).

Residues C41, C105, and C107 each contribute to the iron-sulfur cluster site.

It belongs to the HesB/IscA family. In terms of assembly, homodimer. Iron-sulfur cluster serves as cofactor.

Functionally, required for insertion of 4Fe-4S clusters for at least IspG. This chain is Iron-sulfur cluster insertion protein ErpA, found in Aliivibrio fischeri (strain ATCC 700601 / ES114) (Vibrio fischeri).